A 589-amino-acid polypeptide reads, in one-letter code: Heterogeneous nuclear ribonucleoprotein L (589 aa).

The segment covering 1–16 (MSRRLLPRAEKRRRRL) has biased composition (basic residues). Residues 1–100 (MSRRLLPRAE…NYDDPHKTPA (100 aa)) form a disordered region. Residues 17 to 27 (EQRQQPDEQRR) are compositionally biased toward basic and acidic residues. The segment covering 38-54 (AGGGGGGGRYYGGGSEG) has biased composition (gly residues). Residue Ser-52 is modified to Phosphoserine. Residues Lys-59 and Lys-62 each participate in a glycyl lysine isopeptide (Lys-Gly) (interchain with G-Cter in SUMO2) cross-link. Over residues 69 to 90 (QHGGGGGGGGGAGAAGGGGGGE) the composition is skewed to gly residues. At Ser-101 the chain carries Phosphoserine. Residues 102 to 176 (PVVHIRGLID…HPAFVNYSTS (75 aa)) form the RRM 1 domain. Lys-136 participates in a covalent cross-link: Glycyl lysine isopeptide (Lys-Gly) (interchain with G-Cter in SUMO2). Ser-185 bears the Phosphoserine mark. In terms of domain architecture, RRM 2 spans 193-270 (SVLLFTILNP…CTLKIEYAKP (78 aa)). Lys-269 carries the N6-acetyllysine modification. The span at 284–301 (DYTNPNLSGQGDPGSNPN) shows a compositional bias: polar residues. Residues 284 to 378 (DYTNPNLSGQ…PPPPPEYGPH (95 aa)) form a disordered region. Phosphoserine occurs at positions 291 and 298. A Glycyl lysine isopeptide (Lys-Gly) (interchain with G-Cter in SUMO2) cross-link involves residue Lys-302. Asymmetric dimethylarginine is present on residues Arg-354 and Arg-358. Over residues 364–375 (GHPPPPPPPPEY) the composition is skewed to pro residues. A Phosphoserine modification is found at Ser-381. 2 RRM domains span residues 382–478 (PVLM…KDFS) and 495–583 (RIQH…LCFS). Position 544 is a phosphoserine; by CaMK4 (Ser-544). Residue Lys-568 forms a Glycyl lysine isopeptide (Lys-Gly) (interchain with G-Cter in SUMO2) linkage.

Identified in a IGF2BP1-dependent mRNP granule complex containing untranslated mRNAs. Interacts with HNRNPLL. Interacts with APEX1; the interaction is DNA-dependent. Component of a complex with SETD2. Interacts with ELAVL1. Part of a transcription inhibitory ribonucleoprotein complex composed at least of the circular RNA circZNF827, ZNF827 and HNRNPK. Interacts with CHD8 in an RNA-dependent manner. Several isoelectric forms of the L protein are probably the results of post-translational modifications. In terms of processing, phosphorylation at Ser-544 by CaMK4 enhances interaction with a CaMK4-responsive RNA element (CaRRE1), and prevents inclusion of the stress axis-regulated exon (STREX) of the KCNMA1 potassium channel transcripts upon membrane depolarization.

The protein localises to the nucleus. The protein resides in the nucleoplasm. Its subcellular location is the cytoplasm. In terms of biological role, splicing factor binding to exonic or intronic sites and acting as either an activator or repressor of exon inclusion. Exhibits a binding preference for CA-rich elements. Component of the heterogeneous nuclear ribonucleoprotein (hnRNP) complexes and associated with most nascent transcripts. Associates, together with APEX1, to the negative calcium responsive element (nCaRE) B2 of the APEX2 promoter. As part of a ribonucleoprotein complex composed at least of ZNF827, HNRNPK and the circular RNA circZNF827 that nucleates the complex on chromatin, may negatively regulate the transcription of genes involved in neuronal differentiation. Regulates alternative splicing of a core group of genes involved in neuronal differentiation, likely by mediating H3K36me3-coupled transcription elongation and co-transcriptional RNA processing via interaction with CHD8. The chain is Heterogeneous nuclear ribonucleoprotein L (HNRNPL) from Homo sapiens (Human).